Reading from the N-terminus, the 263-residue chain is tRNA uridine(34) hydroxylase (263 aa).

In terms of domain architecture, Rhodanese spans 129–223 (EGREIALLDT…YFEEVGGAHY (95 aa)). The active-site Cysteine persulfide intermediate is the Cys-183.

Belongs to the TrhO family.

It catalyses the reaction uridine(34) in tRNA + AH2 + O2 = 5-hydroxyuridine(34) in tRNA + A + H2O. Its function is as follows. Catalyzes oxygen-dependent 5-hydroxyuridine (ho5U) modification at position 34 in tRNAs. The chain is tRNA uridine(34) hydroxylase from Variovorax paradoxus (strain S110).